The chain runs to 260 residues: 21S rRNA pseudouridine(2819) synthase (260 aa).

Aspartate 68 is a catalytic residue.

It belongs to the pseudouridine synthase RluA family.

The protein resides in the mitochondrion. It carries out the reaction uridine(2819) in 21S rRNA = pseudouridine(2819) in 21S rRNA. Functionally, pseudouridylate synthase responsible for the pseudouridine-2819 formation in mitochondrial 21S rRNA. May modulate the efficiency or the fidelity of the mitochondrial translation machinery. This Eremothecium gossypii (strain ATCC 10895 / CBS 109.51 / FGSC 9923 / NRRL Y-1056) (Yeast) protein is 21S rRNA pseudouridine(2819) synthase (PUS5).